Here is a 381-residue protein sequence, read N- to C-terminus: Phthiodiolone/phenolphthiodiolone dimycocerosates ketoreductase (381 aa).

It belongs to the mer family. Phthiodiolone/phenolphthiodiolone dimycocerosates ketoreductase subfamily.

Catalyzes the reduction of the keto moiety of phthiodiolone dimycocerosates (DIM B) and glycosylated phenolphthiodiolone dimycocerosates to form the intermediate compounds phthiotriol and glycosylated phenolphthiotriol dimycocerosates during phthiocerol dimycocerosates (DIM A) and glycosylated phenolphthiocerol dimycocerosates (PGL) biosynthesis. The protein is Phthiodiolone/phenolphthiodiolone dimycocerosates ketoreductase of Mycobacterium bovis (strain ATCC BAA-935 / AF2122/97).